A 247-amino-acid chain; its full sequence is Chymase (247 aa).

The signal sequence occupies residues 1-19 (MHLLTLHLLLLLLGSSTKA). A propeptide spans 20-21 (GE) (activation peptide). The Peptidase S1 domain occupies 22-245 (IIGGTECIPH…YRPWINKILR (224 aa)). Cysteines 51 and 67 form a disulfide. The active-site Charge relay system is the His66. Asn80 carries an N-linked (GlcNAc...) asparagine glycan. Asp110 functions as the Charge relay system in the catalytic mechanism. 2 cysteine pairs are disulfide-bonded: Cys144–Cys209 and Cys175–Cys188. Ser203 (charge relay system) is an active-site residue.

Belongs to the peptidase S1 family. Granzyme subfamily. In terms of tissue distribution, mast cells.

Its subcellular location is the secreted. It is found in the cytoplasmic granule. It carries out the reaction Preferential cleavage: Phe-|-Xaa &gt; Tyr-|-Xaa &gt; Trp-|-Xaa &gt; Leu-|-Xaa.. In terms of biological role, major secreted protease of mast cells with suspected roles in vasoactive peptide generation, extracellular matrix degradation, and regulation of gland secretion. This is Chymase (Cma1) from Mus musculus (Mouse).